We begin with the raw amino-acid sequence, 319 residues long: 3'-5' exoribonuclease YhaM (319 aa).

Positions 12-90 (EAVDGYLLIK…QLKIASIRPT (79 aa)) form a DNA-binding region, OB. The 117-residue stretch at 163-279 (HVVSMLRIGK…LHLIDNIDAK (117 aa)) folds into the HD domain.

This sequence belongs to the YhaM family.

Its function is as follows. Shows a 3'-5' exoribonuclease activity. The protein is 3'-5' exoribonuclease YhaM of Shouchella clausii (strain KSM-K16) (Alkalihalobacillus clausii).